A 244-amino-acid polypeptide reads, in one-letter code: Small ribosomal subunit protein uS2 (244 aa).

This sequence belongs to the universal ribosomal protein uS2 family.

This chain is Small ribosomal subunit protein uS2, found in Hydrogenovibrio crunogenus (strain DSM 25203 / XCL-2) (Thiomicrospira crunogena).